A 1258-amino-acid chain; its full sequence is Phosphatidylinositol 3,4,5-trisphosphate 5-phosphatase 2 (1258 aa).

Positions 21-117 (WYHRDLSRAA…GLVCALLLPV (97 aa)) constitute an SH2 domain. Basic and acidic residues predominate over residues 119–132 (GEREPDPPDDRDAS). A disordered region spans residues 119-180 (GEREPDPPDD…AESAPNGLST (62 aa)). The residue at position 132 (Ser-132) is a Phosphoserine. Positions 145-155 (SGSTSISAPTG) are enriched in polar residues. Positions 156 to 166 (PSSPLPAPETP) are enriched in pro residues. Thr-165 is subject to Phosphothreonine. Residues Ser-241 and Ser-352 each carry the phosphoserine modification. The residue at position 886 (Tyr-886) is a Phosphotyrosine. Ser-890 bears the Phosphoserine mark. Residues 897-1118 (GAKSKAPSVS…FLGEVASGDD (222 aa)) are disordered. The span at 938-950 (PPPTGRPPAPPRA) shows a compositional bias: pro residues. An SH3-binding motif is present at residues 944 to 949 (PPAPPR). The span at 951–965 (APREEPLTPRLKPEG) shows a compositional bias: basic and acidic residues. Position 958 is a phosphothreonine (Thr-958). The NPXY motif signature appears at 983–986 (NPAY). Phosphotyrosine; by SRC is present on Tyr-986. 3 stretches are compositionally biased toward pro residues: residues 996–1007 (LLPPEPPSPARA), 1048–1059 (LPPPDFPPPPLP), and 1087–1104 (GPPP…PGPS). Ser-1131 bears the Phosphoserine mark. Tyr-1135 and Tyr-1162 each carry phosphotyrosine. Positions 1196–1258 (LGEAGMSAWL…LLLDTLQLSK (63 aa)) constitute an SAM domain. Residue Ser-1257 is modified to Phosphoserine.

It belongs to the inositol 1,4,5-trisphosphate 5-phosphatase family. As to quaternary structure, interacts with tyrosine phosphorylated form of SHC1. Interacts with EGFR. Upon stimulation by the EGF signaling pathway, it forms a complex with SHC1 and EGFR. Interacts with cytoskeletal protein SORBS3/vinexin, promoting its localization to the periphery of cells. Forms a complex with filamin (FLNA or FLNB), actin, GPIb (GP1BA or GP1BB) that regulates cortical and submembraneous actin. Interacts with c-Met/MET, when c-Met/MET is phosphorylated on 'Tyr-1356'. Interacts with p130Cas/BCAR1. Interacts with CENTD3/ARAP3 via its SAM domain. Interacts with c-Cbl/CBL and CAP/SORBS1. Interacts with activated EPHA2 receptor. Interacts with receptor FCGR2A. Interacts with receptor FCGR2B. Interacts with tyrosine kinase ABL1. Interacts with tyrosine kinase TEC. Interacts with CSF1R. Interacts (via N-terminus) with SH3YL1 (via SH3 domain). Interacts with FCRL6 (tyrosine phosphorylated form). Interacts (via SH2 domain) with tyrosine phosphorylated KLRC1 (via ITIM). Interacts with NEDD9/HEF1. Tyrosine phosphorylated by the members of the SRC family after exposure to a diverse array of extracellular stimuli such as insulin, growth factors such as EGF or PDGF, chemokines, integrin ligands and hypertonic and oxidative stress. May be phosphorylated upon IgG receptor FCGR2B-binding. Phosphorylated at Tyr-986 following cell attachment and spreading. Phosphorylated at Tyr-1162 following EGF signaling pathway stimulation. Phosphorylated at Thr-958 in response to PDGF. As to expression, widely expressed, most prominently in skeletal muscle, heart and brain. Present in platelets. Expressed in transformed myeloid cells and in primary macrophages, but not in peripheral blood monocytes.

It localises to the cytoplasm. It is found in the cytosol. The protein resides in the cytoskeleton. Its subcellular location is the membrane. The protein localises to the cell projection. It localises to the filopodium. It is found in the lamellipodium. The protein resides in the basal cell membrane. Its subcellular location is the nucleus. The protein localises to the nucleus speckle. It localises to the spindle pole. It catalyses the reaction a 1,2-diacyl-sn-glycero-3-phospho-(1D-myo-inositol-3,4,5-trisphosphate) + H2O = a 1,2-diacyl-sn-glycero-3-phospho-(1D-myo-inositol-3,4-bisphosphate) + phosphate. It carries out the reaction 1,2-dioctanoyl-sn-glycero-3-phospho-(1D-myo-inositol-3,4,5-trisphosphate) + H2O = 1,2-dioctanoyl-sn-glycero-3-phospho-(1D-myo-inositol-3,4-bisphosphate) + phosphate. The enzyme catalyses 1,2-dihexadecanoyl-sn-glycero-3-phospho-(1D-myo-inositol-3,4,5-trisphosphate) + H2O = 1,2-dihexadecanoyl-sn-glycero-3-phospho-(1D-myo-inositol-3,4-bisphosphate) + phosphate. Activated upon translocation to the sites of synthesis of PtdIns(3,4,5)P3 in the membrane. Enzymatic activity is enhanced in the presence of phosphatidylserine. In terms of biological role, phosphatidylinositol (PtdIns) phosphatase that specifically hydrolyzes the 5-phosphate of phosphatidylinositol-3,4,5-trisphosphate (PtdIns(3,4,5)P3) to produce PtdIns(3,4)P2, thereby negatively regulating the PI3K (phosphoinositide 3-kinase) pathways. Required for correct mitotic spindle orientation and therefore progression of mitosis. Plays a central role in regulation of PI3K-dependent insulin signaling, although the precise molecular mechanisms and signaling pathways remain unclear. While overexpression reduces both insulin-stimulated MAP kinase and Akt activation, its absence does not affect insulin signaling or GLUT4 trafficking. Confers resistance to dietary obesity. May act by regulating AKT2, but not AKT1, phosphorylation at the plasma membrane. Part of a signaling pathway that regulates actin cytoskeleton remodeling. Required for the maintenance and dynamic remodeling of actin structures as well as in endocytosis, having a major impact on ligand-induced EGFR internalization and degradation. Participates in regulation of cortical and submembraneous actin by hydrolyzing PtdIns(3,4,5)P3 thereby regulating membrane ruffling. Regulates cell adhesion and cell spreading. Required for HGF-mediated lamellipodium formation, cell scattering and spreading. Acts as a negative regulator of EPHA2 receptor endocytosis by inhibiting via PI3K-dependent Rac1 activation. Acts as a regulator of neuritogenesis by regulating PtdIns(3,4,5)P3 level and is required to form an initial protrusive pattern, and later, maintain proper neurite outgrowth. Acts as a negative regulator of the FC-gamma-RIIA receptor (FCGR2A). Mediates signaling from the FC-gamma-RIIB receptor (FCGR2B), playing a central role in terminating signal transduction from activating immune/hematopoietic cell receptor systems. Involved in EGF signaling pathway. Upon stimulation by EGF, it is recruited by EGFR and dephosphorylates PtdIns(3,4,5)P3. Plays a negative role in regulating the PI3K-PKB pathway, possibly by inhibiting PKB activity. Down-regulates Fc-gamma-R-mediated phagocytosis in macrophages independently of INPP5D/SHIP1. In macrophages, down-regulates NF-kappa-B-dependent gene transcription by regulating macrophage colony-stimulating factor (M-CSF)-induced signaling. Plays a role in the localization of AURKA and NEDD9/HEF1 to the basolateral membrane at interphase in polarized cysts, thereby mediates cell cycle homeostasis, cell polarization and cilia assembly. Additionally promotion of cilia growth is also facilitated by hydrolysis of (PtdIns(3,4,5)P3) to PtdIns(3,4)P2. Promotes formation of apical membrane-initiation sites during the initial stages of lumen formation via Rho family-induced actin filament organization and CTNNB1 localization to cell-cell contacts. May also hydrolyze PtdIns(1,3,4,5)P4, and could thus affect the levels of the higher inositol polyphosphates like InsP6. Involved in endochondral ossification. The sequence is that of Phosphatidylinositol 3,4,5-trisphosphate 5-phosphatase 2 from Homo sapiens (Human).